The chain runs to 370 residues: Histidinol-phosphate aminotransferase (370 aa).

N6-(pyridoxal phosphate)lysine is present on Lys222.

It belongs to the class-II pyridoxal-phosphate-dependent aminotransferase family. Histidinol-phosphate aminotransferase subfamily. Homodimer. It depends on pyridoxal 5'-phosphate as a cofactor.

The enzyme catalyses L-histidinol phosphate + 2-oxoglutarate = 3-(imidazol-4-yl)-2-oxopropyl phosphate + L-glutamate. The protein operates within amino-acid biosynthesis; L-histidine biosynthesis; L-histidine from 5-phospho-alpha-D-ribose 1-diphosphate: step 7/9. This is Histidinol-phosphate aminotransferase from Bacillus cytotoxicus (strain DSM 22905 / CIP 110041 / 391-98 / NVH 391-98).